We begin with the raw amino-acid sequence, 264 residues long: Thymidylate synthase 2 (264 aa).

Arg21 contacts dUMP. His51 provides a ligand contact to (6R)-5,10-methylene-5,6,7,8-tetrahydrofolate. 126–127 (RR) is a dUMP binding site. Cys146 (nucleophile) is an active-site residue. Residues 166 to 169 (RSAD), Asn177, and 207 to 209 (HIY) each bind dUMP. Residue Asp169 participates in (6R)-5,10-methylene-5,6,7,8-tetrahydrofolate binding. Ser263 lines the (6R)-5,10-methylene-5,6,7,8-tetrahydrofolate pocket.

The protein belongs to the thymidylate synthase family. Bacterial-type ThyA subfamily. Homodimer.

The protein localises to the cytoplasm. The enzyme catalyses dUMP + (6R)-5,10-methylene-5,6,7,8-tetrahydrofolate = 7,8-dihydrofolate + dTMP. The protein operates within pyrimidine metabolism; dTTP biosynthesis. Catalyzes the reductive methylation of 2'-deoxyuridine-5'-monophosphate (dUMP) to 2'-deoxythymidine-5'-monophosphate (dTMP) while utilizing 5,10-methylenetetrahydrofolate (mTHF) as the methyl donor and reductant in the reaction, yielding dihydrofolate (DHF) as a by-product. This enzymatic reaction provides an intracellular de novo source of dTMP, an essential precursor for DNA biosynthesis. In Bacillus amyloliquefaciens (Bacillus velezensis), this protein is Thymidylate synthase 2.